A 203-amino-acid chain; its full sequence is Peptide deformylase (203 aa).

Positions 130 and 173 each coordinate Fe cation. The active site involves glutamate 174. Histidine 177 is a binding site for Fe cation.

Belongs to the polypeptide deformylase family. Fe(2+) serves as cofactor.

It catalyses the reaction N-terminal N-formyl-L-methionyl-[peptide] + H2O = N-terminal L-methionyl-[peptide] + formate. Its function is as follows. Removes the formyl group from the N-terminal Met of newly synthesized proteins. Requires at least a dipeptide for an efficient rate of reaction. N-terminal L-methionine is a prerequisite for activity but the enzyme has broad specificity at other positions. In Streptococcus pneumoniae serotype 4 (strain ATCC BAA-334 / TIGR4), this protein is Peptide deformylase.